The sequence spans 101 residues: Small ribosomal subunit protein bS18c (101 aa).

The segment covering 1-19 has biased composition (basic residues); that stretch reads MDKSKRPFRKSKRSFRRRL. Positions 1–23 are disordered; that stretch reads MDKSKRPFRKSKRSFRRRLPPIG.

The protein belongs to the bacterial ribosomal protein bS18 family. As to quaternary structure, part of the 30S ribosomal subunit.

The protein resides in the plastid. It localises to the chloroplast. The polypeptide is Small ribosomal subunit protein bS18c (Ceratophyllum demersum (Rigid hornwort)).